Consider the following 429-residue polypeptide: 3-phosphoshikimate 1-carboxyvinyltransferase (429 aa).

3 residues coordinate 3-phosphoshikimate: Lys-11, Ser-12, and Arg-16. Lys-11 lines the phosphoenolpyruvate pocket. Residues Gly-82 and Arg-110 each coordinate phosphoenolpyruvate. 3-phosphoshikimate is bound by residues Ser-155, Gln-157, Asp-302, and Lys-329. Gln-157 contacts phosphoenolpyruvate. Asp-302 (proton acceptor) is an active-site residue. Arg-333 and Arg-385 together coordinate phosphoenolpyruvate.

Belongs to the EPSP synthase family. As to quaternary structure, monomer.

Its subcellular location is the cytoplasm. It carries out the reaction 3-phosphoshikimate + phosphoenolpyruvate = 5-O-(1-carboxyvinyl)-3-phosphoshikimate + phosphate. The protein operates within metabolic intermediate biosynthesis; chorismate biosynthesis; chorismate from D-erythrose 4-phosphate and phosphoenolpyruvate: step 6/7. Its function is as follows. Catalyzes the transfer of the enolpyruvyl moiety of phosphoenolpyruvate (PEP) to the 5-hydroxyl of shikimate-3-phosphate (S3P) to produce enolpyruvyl shikimate-3-phosphate and inorganic phosphate. In Helicobacter pylori (strain Shi470), this protein is 3-phosphoshikimate 1-carboxyvinyltransferase.